We begin with the raw amino-acid sequence, 261 residues long: Undecaprenyl-diphosphatase (261 aa).

7 helical membrane-spanning segments follow: residues 38-58 (RSDFFNIVIQAGAILAITFVF), 75-95 (RDYVMKLATAFLITAVVGLAV), 106-126 (IQPIAWALIIGGIWILIAESV), 136-156 (VTWSVAIAVGLAQVVAGVFPG), 181-201 (FSFLVGIPTMFSASSYACFEL), 217-237 (VAFVAAMLTGFAVVKWLLGYI), and 241-261 (SFAPFAYYRIALGLVLLTWLT).

This sequence belongs to the UppP family.

It is found in the cell inner membrane. The catalysed reaction is di-trans,octa-cis-undecaprenyl diphosphate + H2O = di-trans,octa-cis-undecaprenyl phosphate + phosphate + H(+). Catalyzes the dephosphorylation of undecaprenyl diphosphate (UPP). Confers resistance to bacitracin. The polypeptide is Undecaprenyl-diphosphatase (Xylella fastidiosa (strain Temecula1 / ATCC 700964)).